The primary structure comprises 188 residues: Elongation factor P (188 aa).

This sequence belongs to the elongation factor P family.

It localises to the cytoplasm. It functions in the pathway protein biosynthesis; polypeptide chain elongation. Involved in peptide bond synthesis. Stimulates efficient translation and peptide-bond synthesis on native or reconstituted 70S ribosomes in vitro. Probably functions indirectly by altering the affinity of the ribosome for aminoacyl-tRNA, thus increasing their reactivity as acceptors for peptidyl transferase. This Cereibacter sphaeroides (strain KD131 / KCTC 12085) (Rhodobacter sphaeroides) protein is Elongation factor P.